Here is a 249-residue protein sequence, read N- to C-terminus: MNLGEKLTEGKTKIVYAHPNDPTLAIIIHKDGISAGDGARRHIIPGKGALSGRTTANVFTMLNHAGVATHFVAAPEPTVMIVRRCVMIPLEVVNRRIATGSYIRRHPDVAEGTRFDPPLLEFFLKDDARHDPQISPEEIVAQGIASADEVEQLASESRRVFLLIEEAWAAQDIVLCDLKIEFGRDASGALVVADVIDNDSWRIWPGGMKERMLDKQVYRNMPVVTDDGLEQVRRLYEEVAHRTDAWVNR.

Belongs to the SAICAR synthetase family.

It carries out the reaction 5-amino-1-(5-phospho-D-ribosyl)imidazole-4-carboxylate + L-aspartate + ATP = (2S)-2-[5-amino-1-(5-phospho-beta-D-ribosyl)imidazole-4-carboxamido]succinate + ADP + phosphate + 2 H(+). It participates in purine metabolism; IMP biosynthesis via de novo pathway; 5-amino-1-(5-phospho-D-ribosyl)imidazole-4-carboxamide from 5-amino-1-(5-phospho-D-ribosyl)imidazole-4-carboxylate: step 1/2. The chain is Phosphoribosylaminoimidazole-succinocarboxamide synthase from Roseiflexus castenholzii (strain DSM 13941 / HLO8).